The primary structure comprises 511 residues: Type 2 DNA topoisomerase 6 subunit B-like (511 aa).

Residues 398–485 (DSAQGTEDAP…RALAPGRASL (88 aa)) are disordered. Polar residues predominate over residues 408–422 (DNSSLELLADTSGQA). The span at 440–451 (LRSARAPSPSEA) shows a compositional bias: low complexity. The segment covering 466–475 (RGREHREAHG) has biased composition (basic and acidic residues).

It belongs to the TOP6B-like family. In terms of assembly, heterotetramer of SPO11 and 2 TOP6BL chains. Interacts with SPO11. Detected in lung, spleen,colon and in skeletal muscle. Expressed in the ovaries, Fallopian tubes and uterus.

Its subcellular location is the chromosome. Functionally, component of a topoisomerase 6 complex specifically required for meiotic recombination. Together with SPO11, mediates DNA cleavage that forms the double-strand breaks (DSB) that initiate meiotic recombination. The complex promotes relaxation of negative and positive supercoiled DNA and DNA decatenation through cleavage and ligation cycles. This is Type 2 DNA topoisomerase 6 subunit B-like from Homo sapiens (Human).